We begin with the raw amino-acid sequence, 296 residues long: Ribosomal RNA small subunit methyltransferase H (296 aa).

S-adenosyl-L-methionine is bound by residues 30 to 32, aspartate 49, phenylalanine 77, aspartate 95, and glutamine 102; that span reads GGH.

It belongs to the methyltransferase superfamily. RsmH family.

It localises to the cytoplasm. The enzyme catalyses cytidine(1402) in 16S rRNA + S-adenosyl-L-methionine = N(4)-methylcytidine(1402) in 16S rRNA + S-adenosyl-L-homocysteine + H(+). Its function is as follows. Specifically methylates the N4 position of cytidine in position 1402 (C1402) of 16S rRNA. The sequence is that of Ribosomal RNA small subunit methyltransferase H from Hydrogenobaculum sp. (strain Y04AAS1).